The following is a 247-amino-acid chain: Reticulon-like protein B8 (247 aa).

The Reticulon domain maps to 61–247 (SADVLLWRNK…SGKFGLKKRE (187 aa)). Helical transmembrane passes span 71 to 91 (KISA…EWIN), 92 to 112 (FHFL…QFVW), and 166 to 186 (FLMA…CNFL).

Its subcellular location is the endoplasmic reticulum membrane. The chain is Reticulon-like protein B8 (RTNLB8) from Arabidopsis thaliana (Mouse-ear cress).